The sequence spans 567 residues: MRQSQSFIPTLREVPADAEVKSHQLLLRAGFIRQSASGVYTFLPLGQRVLQKVEAIIREEMNRAGAIELLMPALQPAELWQQSGRWYSYGPELMRLKDRHERDFALGPTHEEIITALVRDEVKTYKRLPLTLYQIQVKFRDEKRPRFGLLRGREFIMKDAYSFHTSQESLDETYNKMYEAYSNIFRRCGLNFRAVIADSGAIGGKDTHEFMVLSEIGEDTIAYSDASDYAANIEMAPVITTYEKSDEPLRKLEKVHTPGQKTIEEVASYLQVTPEKCIKSLLFKVDDRYVLVLVRGDHEANDVKVKNLFDASVVELATPEETKQAMNCEVGSLGPIGVSESVTIVADHAVKAIVNGVCGANEEGYHYIGVNPERDFTISEYADLRFIQEGDPSPDGKGTIRFARGIEVGHVFKLGTRYSKAMNATYLDENGRSQTMIMGCYGIGVSRLVAAIAEQFADENGLVWPASVAPFHVHLISVNAKNEEQRQLADEWYEKLGQAGFEVLYDDRPERAGVKFADSDLIGIPIRVTVGKRANEGIVEIKVRQTGESMEVSVDELIDTIRRLLQQ.

Belongs to the class-II aminoacyl-tRNA synthetase family. ProS type 1 subfamily. As to quaternary structure, homodimer.

It localises to the cytoplasm. It carries out the reaction tRNA(Pro) + L-proline + ATP = L-prolyl-tRNA(Pro) + AMP + diphosphate. Catalyzes the attachment of proline to tRNA(Pro) in a two-step reaction: proline is first activated by ATP to form Pro-AMP and then transferred to the acceptor end of tRNA(Pro). As ProRS can inadvertently accommodate and process non-cognate amino acids such as alanine and cysteine, to avoid such errors it has two additional distinct editing activities against alanine. One activity is designated as 'pretransfer' editing and involves the tRNA(Pro)-independent hydrolysis of activated Ala-AMP. The other activity is designated 'posttransfer' editing and involves deacylation of mischarged Ala-tRNA(Pro). The misacylated Cys-tRNA(Pro) is not edited by ProRS. This is Proline--tRNA ligase from Geobacillus sp. (strain WCH70).